We begin with the raw amino-acid sequence, 201 residues long: Holliday junction resolvase RecU (201 aa).

The interval 1-26 (MAIGYPNGKKYAASQEELPQQKRKAP) is disordered. Positions 87, 89, 102, and 121 each coordinate Mg(2+).

Belongs to the RecU family. Requires Mg(2+) as cofactor.

It localises to the cytoplasm. The enzyme catalyses Endonucleolytic cleavage at a junction such as a reciprocal single-stranded crossover between two homologous DNA duplexes (Holliday junction).. Functionally, endonuclease that resolves Holliday junction intermediates in genetic recombination. Cleaves mobile four-strand junctions by introducing symmetrical nicks in paired strands. Promotes annealing of linear ssDNA with homologous dsDNA. Required for DNA repair, homologous recombination and chromosome segregation. This Listeria monocytogenes serotype 4a (strain HCC23) protein is Holliday junction resolvase RecU.